A 100-amino-acid polypeptide reads, in one-letter code: Apolipoprotein C-II (100 aa).

The signal sequence occupies residues 1–22 (MGSRFLLALFLVLLVLGCEVQA). Positions 66-74 (SVDEKLRDM) are lipid binding. The interval 78 to 100 (SSAAMTTYASIFTDQILTLLKGE) is lipoprotein lipase cofactor.

Belongs to the apolipoprotein C2 family. In terms of processing, proapolipoprotein C-II is synthesized as a sialic acid containing glycoprotein which is subsequently desialylated prior to its proteolytic processing. Proapolipoprotein C-II, the major form found in plasma undergoes proteolytic cleavage of its N-terminal hexapeptide to generate the mature form apolipoprotein C-II, which occurs as the minor form in plasma.

It localises to the secreted. Component of chylomicrons, very low-density lipoproteins (VLDL), low-density lipoproteins (LDL), and high-density lipoproteins (HDL) in plasma. Plays an important role in lipoprotein metabolism as an activator of lipoprotein lipase. The sequence is that of Apolipoprotein C-II (APOC2) from Ellobius talpinus (Northern mole vole).